The sequence spans 438 residues: Thymidine phosphorylase (438 aa).

It belongs to the thymidine/pyrimidine-nucleoside phosphorylase family. Homodimer.

It carries out the reaction thymidine + phosphate = 2-deoxy-alpha-D-ribose 1-phosphate + thymine. Its pathway is pyrimidine metabolism; dTMP biosynthesis via salvage pathway; dTMP from thymine: step 1/2. In terms of biological role, the enzymes which catalyze the reversible phosphorolysis of pyrimidine nucleosides are involved in the degradation of these compounds and in their utilization as carbon and energy sources, or in the rescue of pyrimidine bases for nucleotide synthesis. The chain is Thymidine phosphorylase from Burkholderia cenocepacia (strain ATCC BAA-245 / DSM 16553 / LMG 16656 / NCTC 13227 / J2315 / CF5610) (Burkholderia cepacia (strain J2315)).